The primary structure comprises 398 residues: Serine/threonine-protein kinase 32A (398 aa).

A lipid anchor (N-myristoyl glycine) is attached at Gly2. In terms of domain architecture, Protein kinase spans Phe23–Met281. ATP contacts are provided by residues Ile29–Val37 and Lys52. The active-site Proton acceptor is Asp146. Positions Ala379–Leu398 are disordered. Positions Glu388–Leu398 are enriched in acidic residues.

This sequence belongs to the protein kinase superfamily. Ser/Thr protein kinase family. It depends on Mg(2+) as a cofactor.

Its subcellular location is the cell membrane. It catalyses the reaction L-seryl-[protein] + ATP = O-phospho-L-seryl-[protein] + ADP + H(+). The catalysed reaction is L-threonyl-[protein] + ATP = O-phospho-L-threonyl-[protein] + ADP + H(+). This is Serine/threonine-protein kinase 32A from Mus musculus (Mouse).